Here is a 248-residue protein sequence, read N- to C-terminus: Granzyme-like protein 2 (248 aa).

An N-terminal signal peptide occupies residues M1–G18. A propeptide spans G19–E20 (activation peptide). One can recognise a Peptidase S1 domain in the interval I21–K243. An intrachain disulfide couples C50 to C66. Active-site charge relay system residues include H65 and D108. Disulfide bonds link C142-C207 and C172-C186. N-linked (GlcNAc...) asparagine glycans are attached at residues N152 and N180. S201 acts as the Charge relay system in catalysis.

Belongs to the peptidase S1 family. Granzyme subfamily. As to expression, duodenum, lung and spleen.

In terms of biological role, this enzyme is necessary for target cell lysis in cell-mediated immune responses. The polypeptide is Granzyme-like protein 2 (Rattus norvegicus (Rat)).